A 305-amino-acid chain; its full sequence is UDP-N-acetylenolpyruvoylglucosamine reductase (305 aa).

The region spanning 37-202 (GIGGPARFLA…LSVTFNLEPK (166 aa)) is the FAD-binding PCMH-type domain. Arg-183 is an active-site residue.

This sequence belongs to the MurB family. FAD serves as cofactor.

The protein resides in the cytoplasm. The catalysed reaction is UDP-N-acetyl-alpha-D-muramate + NADP(+) = UDP-N-acetyl-3-O-(1-carboxyvinyl)-alpha-D-glucosamine + NADPH + H(+). It functions in the pathway cell wall biogenesis; peptidoglycan biosynthesis. Cell wall formation. The protein is UDP-N-acetylenolpyruvoylglucosamine reductase of Rhodopirellula baltica (strain DSM 10527 / NCIMB 13988 / SH1).